The sequence spans 343 residues: GTPase Obg (343 aa).

Residues 1–159 (MQFIDHATIC…RQLRLELKLL (159 aa)) form the Obg domain. In terms of domain architecture, OBG-type G spans 160–328 (AEVGLIGLPN…LLRLVWQWLD (169 aa)). Residues 166-173 (GLPNAGKS), 191-195 (FTTLV), 213-216 (DIPG), 280-283 (NKID), and 309-311 (SSA) contribute to the GTP site. Mg(2+) is bound by residues serine 173 and threonine 193.

Belongs to the TRAFAC class OBG-HflX-like GTPase superfamily. OBG GTPase family. In terms of assembly, monomer. The cofactor is Mg(2+).

It localises to the cytoplasm. In terms of biological role, an essential GTPase which binds GTP, GDP and possibly (p)ppGpp with moderate affinity, with high nucleotide exchange rates and a fairly low GTP hydrolysis rate. Plays a role in control of the cell cycle, stress response, ribosome biogenesis and in those bacteria that undergo differentiation, in morphogenesis control. The protein is GTPase Obg of Synechococcus elongatus (strain ATCC 33912 / PCC 7942 / FACHB-805) (Anacystis nidulans R2).